Consider the following 909-residue polypeptide: SCY1-like protein 2 B (909 aa).

The region spanning Tyr39–Phe343 is the Protein kinase domain. 7 HEAT repeats span residues Ser311–Arg348, Arg350–Ser382, Arg383–Val401, Leu402–Gly439, Val465–Gln502, Val499–Lys537, and Phe578–Glu617. Disordered regions lie at residues Asn624–Thr772 and Ser804–Leu909. Polar residues-rich tracts occupy residues Asn638–Ile648, Pro678–Thr712, Arg724–Ala747, Ser804–Leu828, and Lys835–Lys852.

Belongs to the protein kinase superfamily. As to quaternary structure, interacts with VTI11, VTI12 and CHC1. As to expression, expressed in roots, seedlings, leaves, stems, flowers, and, at low levels, in siliques.

Its subcellular location is the golgi apparatus membrane. It is found in the golgi apparatus. It localises to the trans-Golgi network membrane. The protein resides in the prevacuolar compartment membrane. Probably inactive kinase. Component of the AP2-containing clathrin coat that regulates clathrin-dependent trafficking at plasma membrane, TGN and endosomal system. Together with SCYL2B, required for cell growth, plant growth and development. Essential for polarized root hair development probably by mediating the root hair tip localization of cellulose synthase-like D3 (CSLD3). This chain is SCY1-like protein 2 B, found in Arabidopsis thaliana (Mouse-ear cress).